The sequence spans 304 residues: MGSMSEHIPATNSTGTTRVKRGLADMLKGGVIMDVVTPEQAKIAEDAGACAVMALERVPADIRAQGGVARMSDPDLIEGIIEAVSIPVMAKARIGHFVEAQVLESLRVDFIDESEVLSPADYANHIDKWAFGVPFVCGATNLGEALRRITEGAAMIRSKGEAGTGDVSEAVRHLRTIRAEMARLSSMSPDELYVAAKELQAPYDLVAEVARTGELPVVLFVAGGVATPADAALVMQMGAQGVFVGSGIFKSGNPAARAAAIVKATTAYDDPDTIAEVSRGLGEAMVGINVADVPAPHRLAERGW.

Aspartate 34 provides a ligand contact to D-ribose 5-phosphate. Catalysis depends on lysine 91, which acts as the Schiff-base intermediate with D-ribose 5-phosphate. Position 163 (glycine 163) interacts with D-ribose 5-phosphate. Position 175 (arginine 175) interacts with D-glyceraldehyde 3-phosphate. D-ribose 5-phosphate contacts are provided by residues glycine 224 and 245-246 (GS).

Belongs to the PdxS/SNZ family. In the presence of PdxT, forms a dodecamer of heterodimers.

It catalyses the reaction aldehydo-D-ribose 5-phosphate + D-glyceraldehyde 3-phosphate + L-glutamine = pyridoxal 5'-phosphate + L-glutamate + phosphate + 3 H2O + H(+). It functions in the pathway cofactor biosynthesis; pyridoxal 5'-phosphate biosynthesis. In terms of biological role, catalyzes the formation of pyridoxal 5'-phosphate from ribose 5-phosphate (RBP), glyceraldehyde 3-phosphate (G3P) and ammonia. The ammonia is provided by the PdxT subunit. Can also use ribulose 5-phosphate and dihydroxyacetone phosphate as substrates, resulting from enzyme-catalyzed isomerization of RBP and G3P, respectively. This chain is Pyridoxal 5'-phosphate synthase subunit PdxS, found in Cutibacterium acnes (strain DSM 16379 / KPA171202) (Propionibacterium acnes).